A 122-amino-acid chain; its full sequence is Large ribosomal subunit protein uL14 (122 aa).

The protein belongs to the universal ribosomal protein uL14 family. Part of the 50S ribosomal subunit. Forms a cluster with proteins L3 and L19. In the 70S ribosome, L14 and L19 interact and together make contacts with the 16S rRNA in bridges B5 and B8.

Binds to 23S rRNA. Forms part of two intersubunit bridges in the 70S ribosome. The sequence is that of Large ribosomal subunit protein uL14 from Nitrobacter winogradskyi (strain ATCC 25391 / DSM 10237 / CIP 104748 / NCIMB 11846 / Nb-255).